Here is a 566-residue protein sequence, read N- to C-terminus: CTP synthase (566 aa).

Residues 1-270 form an amidoligase domain region; the sequence is MTKFVFVTGG…DGLICDKLRL (270 aa). Ser13 provides a ligand contact to CTP. Residue Ser13 coordinates UTP. ATP contacts are provided by residues 14–19 and Asp71; that span reads SLGKGI. Residues Asp71 and Glu144 each coordinate Mg(2+). CTP contacts are provided by residues 151-153, 191-196, and Lys227; these read DIE and KTKPTQ. UTP is bound by residues 191–196 and Lys227; that span reads KTKPTQ. Positions 295–547 constitute a Glutamine amidotransferase type-1 domain; it reads SIAMVGKYVD…IAATLEQRSA (253 aa). Residue Gly356 participates in L-glutamine binding. Cys383 (nucleophile; for glutamine hydrolysis) is an active-site residue. L-glutamine-binding positions include 384-387, Glu407, and Arg473; that span reads LGMQ. Catalysis depends on residues His520 and Glu522.

It belongs to the CTP synthase family. In terms of assembly, homotetramer.

The catalysed reaction is UTP + L-glutamine + ATP + H2O = CTP + L-glutamate + ADP + phosphate + 2 H(+). The enzyme catalyses L-glutamine + H2O = L-glutamate + NH4(+). It catalyses the reaction UTP + NH4(+) + ATP = CTP + ADP + phosphate + 2 H(+). It functions in the pathway pyrimidine metabolism; CTP biosynthesis via de novo pathway; CTP from UDP: step 2/2. Allosterically activated by GTP, when glutamine is the substrate; GTP has no effect on the reaction when ammonia is the substrate. The allosteric effector GTP functions by stabilizing the protein conformation that binds the tetrahedral intermediate(s) formed during glutamine hydrolysis. Inhibited by the product CTP, via allosteric rather than competitive inhibition. Functionally, catalyzes the ATP-dependent amination of UTP to CTP with either L-glutamine or ammonia as the source of nitrogen. Regulates intracellular CTP levels through interactions with the four ribonucleotide triphosphates. The chain is CTP synthase from Polaromonas naphthalenivorans (strain CJ2).